The sequence spans 319 residues: MATTKPYRVLLYYMYTTIENPEEFAAEHLAFCNSLELKGRILVAKEGINGTCSGTVEQTEKYMEAMNNDPRFDGIVFKIDEADGHAFKKMHVRPRPELVTLRLEDDINPHEITGKYLEPKDFYEAMKQEDTVIIDARNDYEFDLGHFKGAIKPDIESFRELPDWIRENKEILEGKKILTYCTGGIRCEKFSGWLVREGYEDVSQLHGGIVTYGKDPEVQGELWDGQCYVFDERIAVPVNQKEHVIVGKDHFTGEPCERYVNCSNPECNKKILCSEENEAKYLRACSHECRVSPRNRYVIQHELTEEQVAAALEKIEAEK.

The 95-residue stretch at 127–221 (KQEDTVIIDA…YGKDPEVQGE (95 aa)) folds into the Rhodanese domain. C181 (cysteine persulfide intermediate) is an active-site residue.

The protein belongs to the TrhO family.

The catalysed reaction is uridine(34) in tRNA + AH2 + O2 = 5-hydroxyuridine(34) in tRNA + A + H2O. Functionally, catalyzes oxygen-dependent 5-hydroxyuridine (ho5U) modification at position 34 in tRNAs. This is tRNA uridine(34) hydroxylase from Bacillus cereus (strain Q1).